A 325-amino-acid chain; its full sequence is GMP reductase (325 aa).

Residue Cys-174 is the Thioimidate intermediate of the active site. Position 203-226 (Ile-203–Val-226) interacts with NADP(+).

This sequence belongs to the IMPDH/GMPR family. GuaC type 2 subfamily.

It catalyses the reaction IMP + NH4(+) + NADP(+) = GMP + NADPH + 2 H(+). In terms of biological role, catalyzes the irreversible NADPH-dependent deamination of GMP to IMP. It functions in the conversion of nucleobase, nucleoside and nucleotide derivatives of G to A nucleotides, and in maintaining the intracellular balance of A and G nucleotides. In Helicobacter pylori (strain G27), this protein is GMP reductase.